Reading from the N-terminus, the 728-residue chain is Catalase B (728 aa).

The first 15 residues, Met-1–Ala-15, serve as a signal peptide directing secretion. The propeptide occupies Val-16–Arg-27. Residue His-102 is part of the active site. A glycan (N-linked (GlcNAc...) asparagine) is linked at Asn-120. Asn-175 is an active-site residue. Tyr-389 serves as a coordination point for heme. Residues Asn-448 and Asn-551 are each glycosylated (N-linked (GlcNAc...) asparagine).

This sequence belongs to the catalase family. Homotetramer. It depends on heme as a cofactor. In terms of processing, N-glycosylated.

It is found in the secreted. It carries out the reaction 2 H2O2 = O2 + 2 H2O. Its function is as follows. Occurs in almost all aerobically respiring organisms and serves to protect cells from the toxic effects of hydrogen peroxide. The sequence is that of Catalase B (catB) from Aspergillus fumigatus (strain ATCC MYA-4609 / CBS 101355 / FGSC A1100 / Af293) (Neosartorya fumigata).